Consider the following 118-residue polypeptide: Small ribosomal subunit protein uS13 (118 aa).

The tract at residues 94 to 118 is disordered; the sequence is GLPVRGQRTKTNARTRKGPRKPIKK.

The protein belongs to the universal ribosomal protein uS13 family. In terms of assembly, part of the 30S ribosomal subunit. Forms a loose heterodimer with protein S19. Forms two bridges to the 50S subunit in the 70S ribosome.

Its function is as follows. Located at the top of the head of the 30S subunit, it contacts several helices of the 16S rRNA. In the 70S ribosome it contacts the 23S rRNA (bridge B1a) and protein L5 of the 50S subunit (bridge B1b), connecting the 2 subunits; these bridges are implicated in subunit movement. Contacts the tRNAs in the A and P-sites. The chain is Small ribosomal subunit protein uS13 from Edwardsiella ictaluri (strain 93-146).